A 332-amino-acid chain; its full sequence is MTKNLLEQLREMTVVVADTGDIQAIEKFTPRDATTNPSLITAAAKMPEYQEIVDQTLLQAKKDAGAGASKGQIVSLAFDRLAVSFGLKILQIIPGRVSTEVDARLSYDTEATITKARELIAQYKAAGIGPERVLIKIASTWEGIKAAEILEKEGIHCNLTLLFGLHQAIACAEAGITLISPFVGRILDWYKKETGRDSYPSAEDPGVLSVTTIYNYYKKFGYKTEVMGASFRNIGEITELAGSDLLTISPGLLGELQATIGELPRKLDPAKAATLDIDKISIDKATFDKMHAADRMAYDKLDEGIKGFTKALEELETLLAERLARLEVVASH.

The Schiff-base intermediate with substrate role is filled by Lys136.

The protein belongs to the transaldolase family. Type 1 subfamily.

It is found in the cytoplasm. The enzyme catalyses D-sedoheptulose 7-phosphate + D-glyceraldehyde 3-phosphate = D-erythrose 4-phosphate + beta-D-fructose 6-phosphate. It functions in the pathway carbohydrate degradation; pentose phosphate pathway; D-glyceraldehyde 3-phosphate and beta-D-fructose 6-phosphate from D-ribose 5-phosphate and D-xylulose 5-phosphate (non-oxidative stage): step 2/3. Its function is as follows. Transaldolase is important for the balance of metabolites in the pentose-phosphate pathway. This chain is Transaldolase, found in Nostoc sp. (strain PCC 7120 / SAG 25.82 / UTEX 2576).